The chain runs to 244 residues: MKIKWPLQLWISLAVFVTIAVGTLLLLQPWQTIKTVTVQSTSIPSEKIERYAGIYPNTPSWKVTGQTQFIAQKIVKHDDKIDTAKVTQEGSHVTIDIAEKVTAGYIQKSKQWYVINRNGIQKKIEIPEGNAPVYTGFNNPADVKTVVSEFVKLELTLRQNISQINFSPNKDNANRLLIIMNDGNTVYATIGTFGKKISYYPGIAAQMPSKGVVDLQFGAYSYAYGTAQANGTKKKADNKAHQKQ.

At 1-6 (MKIKWP) the chain is on the cytoplasmic side. The helical transmembrane segment at 7–27 (LQLWISLAVFVTIAVGTLLLL) threads the bilayer. Positions 28–104 (QPWQTIKTVT…IDIAEKVTAG (77 aa)) constitute a POTRA domain. Topologically, residues 28-244 (QPWQTIKTVT…KADNKAHQKQ (217 aa)) are extracellular.

The protein belongs to the FtsQ/DivIB family. DivIB subfamily.

It is found in the cell membrane. Cell division protein that may be involved in stabilizing or promoting the assembly of the division complex. The chain is Cell division protein DivIB from Leuconostoc kimchii (strain IMSNU 11154 / KCTC 2386 / IH25).